A 965-amino-acid polypeptide reads, in one-letter code: MAESDGGEASPSGGGGGEGSPDPRRPPARPQLTKSRTISGSAASAFDRWGTSNSSSSILVRRSSTAPLPPGAAPRGLLTVAVDEPSYAAPNGGAAMLDRDWCYPSFLGPHASRPRPPRSQQQTPTTTAAAAADSRSPTPAAPPQTASVSQREEEKSLASVVKRPMLLDERRSLSPPPPQQRAPRFDLSPYLVLMLVVTVISFSLAIWQWMKATVLQEKIRSCCSVSTVDCKTTTEAFKINGQHGSDFINSADWNLASCSRMLVFAIPVFLVKYIDQLRRRNTDSIRLRSTEEEVPLKKRIAYKVDVFFSGHPYAKLLALLLATIILIASGGIALYVVSGSGFLEALWLSWTFVADSGNHADQVGLGPRIVSVSISSGGMLVFATMLGLVSDAISEKVDSWRKGKSEVIEVNHILILGWSDKLGSLLKQLAIANKSIGGGVVVVLAERDKEEMEMDIGKLEFDFMGTSVICRSGSPLILADLKKVSVSKARAIIVLASDENADQSDARALRVVLSLTGVKEGLRGHVVVEMSDLDNEPLVKLVGGELIETVVAHDVIGRLMIQCALQPGLAQIWEDILGFENAEFYIKRWPELDGMRFGDVLISFPDAVPCGVKIASKAGKILMNPDNDYVLQEGDEVLVIAEDDDTYVPASLPQVRKGFLPNIPTPPKYPEKILFCGWRRDIHDMIMVLEAFLAPGSELWMFNEVPEKERERKLTDGGMDIYGLTNIKLVHKEGNAVIRRHLESLPLETFDSILILADESVEDSIVHSDSRSLATLLLIRDIQSKRLPSKELKSPLRYNGFCHSSWIREMQHASDKSIIISEILDSRTRNLVSVSKISDYVLSNELVSMALAMVAEDKQINRVLEELFAEEGNEMCIRSAEFYLYEQEELSFFDIMVRARERDEVVIGYRLANDDQAIINPEQKSEIRKWSLDDVFVVISKAGNATYFVKTTVMRSNPVVYSSTF.

Residues 1-11 are compositionally biased toward low complexity; the sequence is MAESDGGEASP. 2 disordered regions span residues 1-76 and 108-158; these read MAES…APRG and GPHA…KSLA. Polar residues predominate over residues 32 to 42; the sequence is LTKSRTISGSA. 2 stretches are compositionally biased toward low complexity: residues 52 to 66 and 118 to 149; these read SNSSSSILVRRSSTA and RSQQQTPTTTAAAAADSRSPTPAAPPQTASVS. Transmembrane regions (helical) follow at residues 187 to 207, 251 to 271, 317 to 337, and 369 to 389; these read LSPYLVLMLVVTVISFSLAIW, ADWNLASCSRMLVFAIPVFLV, LALLLATIILIASGGIALYVV, and IVSVSISSGGMLVFATMLGLV. 2 RCK N-terminal domains span residues 410 to 551 and 670 to 818; these read VNHI…ETVV and PEKI…DKSI.

Belongs to the castor/pollux (TC 1.A.1.23) family. As to expression, expressed in roots, leaves, stems and panicles.

The protein localises to the nucleus membrane. Required for mycorrhizal symbiosis. The chain is Probable ion channel POLLUX from Oryza sativa subsp. japonica (Rice).